A 326-amino-acid polypeptide reads, in one-letter code: Phospho-N-acetylmuramoyl-pentapeptide-transferase (326 aa).

A run of 9 helical transmembrane segments spans residues 3 to 23 (ISISAGIVTFLLTLVEIPAFI), 51 to 71 (TMGGLVFLITSVLVAFFFALF), 79 to 99 (VGMILFILVLYGLVGFLDDFL), 115 to 135 (LALQLLGGVIFYLFYERGGDI), 138 to 158 (VFGYPVHLGFFYIFFALFWLV), 169 to 189 (GVDGLASISVVISLSAYGVIA), 195 to 215 (MDILLVILAMIGGLLGFFIFN), 221 to 243 (VFMGDVGSLALGGMLAAISMALH), and 306 to 326 (FFFWGVGLLASLLTLAILYLM).

The protein belongs to the glycosyltransferase 4 family. MraY subfamily. It depends on Mg(2+) as a cofactor.

It is found in the cell membrane. It carries out the reaction UDP-N-acetyl-alpha-D-muramoyl-L-alanyl-gamma-D-glutamyl-L-lysyl-D-alanyl-D-alanine + di-trans,octa-cis-undecaprenyl phosphate = Mur2Ac(oyl-L-Ala-gamma-D-Glu-L-Lys-D-Ala-D-Ala)-di-trans,octa-cis-undecaprenyl diphosphate + UMP. The protein operates within cell wall biogenesis; peptidoglycan biosynthesis. Functionally, catalyzes the initial step of the lipid cycle reactions in the biosynthesis of the cell wall peptidoglycan: transfers peptidoglycan precursor phospho-MurNAc-pentapeptide from UDP-MurNAc-pentapeptide onto the lipid carrier undecaprenyl phosphate, yielding undecaprenyl-pyrophosphoryl-MurNAc-pentapeptide, known as lipid I. In Streptococcus pneumoniae (strain 70585), this protein is Phospho-N-acetylmuramoyl-pentapeptide-transferase.